Reading from the N-terminus, the 331-residue chain is Ornithine carbamoyltransferase (331 aa).

Residues 57–60 (STRT), glutamine 82, arginine 106, and 133–136 (HPTQ) each bind carbamoyl phosphate. L-ornithine is bound by residues asparagine 166, aspartate 230, and 234 to 235 (SM). Carbamoyl phosphate contacts are provided by residues 272–273 (CL) and arginine 317.

It belongs to the aspartate/ornithine carbamoyltransferase superfamily. OTCase family.

It localises to the cytoplasm. It carries out the reaction carbamoyl phosphate + L-ornithine = L-citrulline + phosphate + H(+). Its pathway is amino-acid degradation; L-arginine degradation via ADI pathway; carbamoyl phosphate from L-arginine: step 2/2. Its function is as follows. Reversibly catalyzes the transfer of the carbamoyl group from carbamoyl phosphate (CP) to the N(epsilon) atom of ornithine (ORN) to produce L-citrulline. This chain is Ornithine carbamoyltransferase, found in Clostridium perfringens (strain SM101 / Type A).